Reading from the N-terminus, the 273-residue chain is Putative phosphoenolpyruvate synthase regulatory protein (273 aa).

154–161 (GVSRSGKT) contributes to the ADP binding site.

The protein belongs to the pyruvate, phosphate/water dikinase regulatory protein family. PSRP subfamily.

The catalysed reaction is [pyruvate, water dikinase] + ADP = [pyruvate, water dikinase]-phosphate + AMP + H(+). It carries out the reaction [pyruvate, water dikinase]-phosphate + phosphate + H(+) = [pyruvate, water dikinase] + diphosphate. Its function is as follows. Bifunctional serine/threonine kinase and phosphorylase involved in the regulation of the phosphoenolpyruvate synthase (PEPS) by catalyzing its phosphorylation/dephosphorylation. The sequence is that of Putative phosphoenolpyruvate synthase regulatory protein from Neisseria gonorrhoeae (strain ATCC 700825 / FA 1090).